The sequence spans 377 residues: Nitric oxide reductase FlRd-NAD(+) reductase (377 aa).

This sequence belongs to the FAD-dependent oxidoreductase family. It depends on FAD as a cofactor.

The protein resides in the cytoplasm. The catalysed reaction is 2 reduced [nitric oxide reductase rubredoxin domain] + NAD(+) + H(+) = 2 oxidized [nitric oxide reductase rubredoxin domain] + NADH. It functions in the pathway nitrogen metabolism; nitric oxide reduction. In terms of biological role, one of at least two accessory proteins for anaerobic nitric oxide (NO) reductase. Reduces the rubredoxin moiety of NO reductase. The chain is Nitric oxide reductase FlRd-NAD(+) reductase from Salmonella paratyphi A (strain AKU_12601).